We begin with the raw amino-acid sequence, 435 residues long: Glucan 1,3-beta-glucosidase (435 aa).

Positions M1–A30 are cleaved as a signal peptide. E222 functions as the Proton donor in the catalytic mechanism. 2 cysteine pairs are disulfide-bonded: C306/C432 and C331/C357. E323 functions as the Nucleophile in the catalytic mechanism.

It belongs to the glycosyl hydrolase 5 (cellulase A) family.

Its subcellular location is the secreted. It carries out the reaction Successive hydrolysis of beta-D-glucose units from the non-reducing ends of (1-&gt;3)-beta-D-glucans, releasing alpha-glucose.. Its function is as follows. Beta-glucanases participate in the metabolism of beta-glucan, the main structural component of the cell wall. It could also function biosynthetically as a transglycosylase. This Pichia angusta (Yeast) protein is Glucan 1,3-beta-glucosidase.